Consider the following 227-residue polypeptide: Phosphoribosylformylglycinamidine synthase subunit PurQ (227 aa).

Positions 3–225 (FAVIVFPGSN…VKQGAHHVKT (223 aa)) constitute a Glutamine amidotransferase type-1 domain. The Nucleophile role is filled by cysteine 86. Active-site residues include histidine 194 and glutamate 196.

In terms of assembly, part of the FGAM synthase complex composed of 1 PurL, 1 PurQ and 2 PurS subunits.

It localises to the cytoplasm. The catalysed reaction is N(2)-formyl-N(1)-(5-phospho-beta-D-ribosyl)glycinamide + L-glutamine + ATP + H2O = 2-formamido-N(1)-(5-O-phospho-beta-D-ribosyl)acetamidine + L-glutamate + ADP + phosphate + H(+). It catalyses the reaction L-glutamine + H2O = L-glutamate + NH4(+). The protein operates within purine metabolism; IMP biosynthesis via de novo pathway; 5-amino-1-(5-phospho-D-ribosyl)imidazole from N(2)-formyl-N(1)-(5-phospho-D-ribosyl)glycinamide: step 1/2. In terms of biological role, part of the phosphoribosylformylglycinamidine synthase complex involved in the purines biosynthetic pathway. Catalyzes the ATP-dependent conversion of formylglycinamide ribonucleotide (FGAR) and glutamine to yield formylglycinamidine ribonucleotide (FGAM) and glutamate. The FGAM synthase complex is composed of three subunits. PurQ produces an ammonia molecule by converting glutamine to glutamate. PurL transfers the ammonia molecule to FGAR to form FGAM in an ATP-dependent manner. PurS interacts with PurQ and PurL and is thought to assist in the transfer of the ammonia molecule from PurQ to PurL. This is Phosphoribosylformylglycinamidine synthase subunit PurQ from Exiguobacterium sibiricum (strain DSM 17290 / CCUG 55495 / CIP 109462 / JCM 13490 / 255-15).